The primary structure comprises 140 residues: Regulator of ribonuclease activity B (140 aa).

Residues 115–140 (FEDPNAQDDDEDDGEAIDEDDNGIRH) form a disordered region. The span at 119–140 (NAQDDDEDDGEAIDEDDNGIRH) shows a compositional bias: acidic residues.

It belongs to the RraB family. Interacts with the C-terminal region of Rne.

Its subcellular location is the cytoplasm. In terms of biological role, globally modulates RNA abundance by binding to RNase E (Rne) and regulating its endonucleolytic activity. Can modulate Rne action in a substrate-dependent manner by altering the composition of the degradosome. This is Regulator of ribonuclease activity B from Pantoea ananatis (strain LMG 20103).